The following is a 521-amino-acid chain: Melanopsin (521 aa).

Residues 1 to 71 (MDSPSGPRVL…VDVPDHAHYT (71 aa)) lie on the Extracellular side of the membrane. Asn-30 and Asn-34 each carry an N-linked (GlcNAc...) asparagine glycan. The chain crosses the membrane as a helical span at residues 72–92 (LGTVILLVGLTGMLGNLTVIY). The Cytoplasmic segment spans residues 93 to 106 (TFCRNRGLRTPANM). Residues 107–127 (FIINLAVSDFLMSVTQAPVFF) traverse the membrane as a helical segment. The Extracellular segment spans residues 128 to 143 (ASSLYKKWLFGETGCE). Cysteines 142 and 220 form a disulfide. A helical transmembrane segment spans residues 144–164 (FYAFCGAVFGITSMITLTAIA). Topologically, residues 165-187 (MDRYLVITRPLATIGRGSKRRTA) are cytoplasmic. A helical membrane pass occupies residues 188 to 208 (LVLLGVWLYALAWSLPPFFGW). The Extracellular portion of the chain corresponds to 209–237 (SAYVPEGLLTSCSWDYMTFTPQVRAYTML). The chain crosses the membrane as a helical span at residues 238 to 258 (LFCFVFFLPLLIIIFCYIFIF). At 259-293 (RAIRETGRACEGCGESPLRQRRQWQRLQSEWKMAK) the chain is on the cytoplasmic side. A helical membrane pass occupies residues 294–314 (VALIVILLFVLSWAPYSTVAL). Topologically, residues 315–329 (VAFAGYSHILTPYMS) are extracellular. The chain crosses the membrane as a helical span at residues 330–350 (SVPAVIAKASAIHNPIIYAIT). Lys-337 bears the N6-(retinylidene)lysine mark. Residues 351–521 (HPKYRVAIAQ…LEDDVTLRHL (171 aa)) are Cytoplasmic-facing. A disordered region spans residues 445-486 (GELKASSSPQVQRSKTPKVPGPSTCRPMKGQGARPSSLRGDQ). A compositionally biased stretch (polar residues) spans 449–458 (ASSSPQVQRS).

Belongs to the G-protein coupled receptor 1 family. Opsin subfamily. In terms of tissue distribution, expressed in the retinal pigment epithelium and ganglion cell layer (at protein level). Also expressed in amacrine cell layers of the retina. Weakly expressed in vibrissae, and tail. As to expression, observed with processes in the outer strata of inner plexiform layer (IPL) close to the inner nuclear layer (INL) or is found to be bistratified with processes located both in the inner (ON) or outer (OFF) layers of the IPL (at protein level). A second population of isoform 1 is identified in processes which are confined to the inner layer of the IPL near to the ganglion cell layer (GCL) (at protein level). About 40 times more abundant than isoform 1 in the retina (at protein level). Isoform 2 is involved in processes localized to the outer IPL or is bistratified with processes in both the inner and outer layers of the IPL (at protein level). Isoform 2 is absent in the processes confined only to the inner layer of the IPL (at protein level).

Its subcellular location is the cell membrane. It localises to the cell projection. The protein localises to the axon. The protein resides in the dendrite. It is found in the perikaryon. Functionally, photoreceptor that binds cis-retinaldehydes. Contributes to pupillar reflex, photoentrainment and other non-image forming responses to light. May be involved in the optokinetic visual tracking response. May be involved in the regulation of retinal hyaloid vessel growth and regression. The protein is Melanopsin (Opn4) of Mus musculus (Mouse).